Here is a 498-residue protein sequence, read N- to C-terminus: Lysine--tRNA ligase (498 aa).

Mg(2+) contacts are provided by Glu-401 and Glu-408.

Belongs to the class-II aminoacyl-tRNA synthetase family. In terms of assembly, homodimer. It depends on Mg(2+) as a cofactor.

It localises to the cytoplasm. The enzyme catalyses tRNA(Lys) + L-lysine + ATP = L-lysyl-tRNA(Lys) + AMP + diphosphate. The protein is Lysine--tRNA ligase of Dehalococcoides mccartyi (strain ATCC BAA-2100 / JCM 16839 / KCTC 5957 / BAV1).